A 117-amino-acid polypeptide reads, in one-letter code: MPPKKDPKGGKAPPSKKKEGSGGGKAKKKKWSKGKVRDKLNNMVLFDQATYDKLYKEVITYKLITPSVVSERLKVRASLAKAGLKELQAKGLVKCVVHHHGQVVYTRATKEADVIVE.

The disordered stretch occupies residues 1-34 (MPPKKDPKGGKAPPSKKKEGSGGGKAKKKKWSKG). The segment covering 25–34 (KAKKKKWSKG) has biased composition (basic residues).

This sequence belongs to the eukaryotic ribosomal protein eS25 family.

The chain is Small ribosomal subunit protein eS25 (rps-25) from Caenorhabditis elegans.